Consider the following 117-residue polypeptide: Large ribosomal subunit protein bL19 (117 aa).

This sequence belongs to the bacterial ribosomal protein bL19 family.

Its function is as follows. This protein is located at the 30S-50S ribosomal subunit interface and may play a role in the structure and function of the aminoacyl-tRNA binding site. The sequence is that of Large ribosomal subunit protein bL19 from Cutibacterium acnes (strain DSM 16379 / KPA171202) (Propionibacterium acnes).